A 220-amino-acid polypeptide reads, in one-letter code: Aspartic protease inhibitor 5 (220 aa).

The signal sequence occupies residues 1 to 23; that stretch reads MMKCLFLLCLCLLPIVVFSSTFT. Residues 24–32 constitute a propeptide that is removed on maturation; sequence SQNLIDLPS. The Vacuolar targeting signal motif lies at 26–31; that stretch reads NLIDLP. The N-linked (GlcNAc...) asparagine glycan is linked to Asn51. 2 disulfides stabilise this stretch: Cys80–Cys125 and Cys174–Cys185.

It belongs to the protease inhibitor I3 (leguminous Kunitz-type inhibitor) family.

Its subcellular location is the vacuole. Its function is as follows. Inhibitor of cathepsin D (aspartic protease). May also inhibit trypsin and chymotrypsin (serine proteases). Protects the plant by inhibiting proteases of invading organisms. The chain is Aspartic protease inhibitor 5 from Solanum tuberosum (Potato).